The primary structure comprises 272 residues: Polar tube protein 2 (272 aa).

The first 21 residues, 1–21 (MLLLFTVVTLVSAAQVAPVTP), serve as a signal peptide directing secretion. N-linked (GlcNAc...) asparagine glycosylation occurs at N134. Residues 231 to 272 (RAIQKKEVKESSKDGEKSSTQNGEGTTDDEDGQQSPDGNGPE) form a disordered region. The span at 234-247 (QKKEVKESSKDGEK) shows a compositional bias: basic and acidic residues. Residues 263 to 272 (QQSPDGNGPE) are compositionally biased toward polar residues.

It localises to the spore polar tube. Involved in formation of a polar tube through which the infectious agent is passed on to the host cell. This is Polar tube protein 2 (PTP2) from Encephalitozoon hellem (Microsporidian parasite).